The primary structure comprises 342 residues: Spore photoproduct lyase (342 aa).

The 229-residue stretch at 77-305 (SKPSAEYAIP…EEKRRYKWGR (229 aa)) folds into the Radical SAM core domain. Residues Cys-91, Cys-95, and Cys-98 each coordinate [4Fe-4S] cluster. The H-T-H motif DNA-binding region spans 218–235 (EAAVKVAKAGYPLGFIVA).

It belongs to the radical SAM superfamily. SPL family. Monomer or homodimer. It depends on [4Fe-4S] cluster as a cofactor. Requires S-adenosyl-L-methionine as cofactor.

It carries out the reaction (5R)-5,6-dihydro-5-(thymidin-7-yl)thymidine in DNA = a thymidine dimer in DNA. Functionally, involved in repair of UV radiation-induced DNA damage during spore germination. Can repair thymine dimer 5-thyminyl-5,6-dihydrothymine (known as spore photoproduct (SP)) by in situ monomerization of SP to two thymines. The polypeptide is Spore photoproduct lyase (splB) (Bacillus subtilis (strain 168)).